Consider the following 488-residue polypeptide: Facilitated trehalose transporter Tret1-2 homolog (488 aa).

The Cytoplasmic portion of the chain corresponds to 1-28; sequence MKILMRADTHVSYSVPAEGPKANFTFSQ. Residues 29 to 49 traverse the membrane as a helical segment; that stretch reads VLAALSVSLCSLVVGFVSAYT. The Extracellular segment spans residues 50–72; it reads SPALVSMTDRTITSFEVTKDAGS. A helical membrane pass occupies residues 73–93; sequence WVGGIMPLAALAGGITGGPLI. At 94–105 the chain is on the cytoplasmic side; it reads EYLGRRTTILAT. The helical transmembrane segment at 106–126 threads the bilayer; sequence AVPFIVSSLLIACAVNVIMIL. At 127 to 129 the chain is on the extracellular side; the sequence is CGR. A helical transmembrane segment spans residues 130–150; that stretch reads FLTGFCVGIASLSLPVYLGET. Residues 151-160 lie on the Cytoplasmic side of the membrane; the sequence is LQPEVRGTLG. The helical transmembrane segment at 161-181 threads the bilayer; that stretch reads LLPTALGNIGILVCYVAGSFM. A glycan (N-linked (GlcNAc...) asparagine) is linked at Asn-182. At 182–184 the chain is on the extracellular side; that stretch reads NWS. A helical transmembrane segment spans residues 185-205; that stretch reads MLAFLGAALPVPFLILMIIIP. The Cytoplasmic segment spans residues 206-268; that stretch reads ETPRWFVNRG…ELFKRINLKP (63 aa). The helical transmembrane segment at 269–289 threads the bilayer; it reads LSISLGLMFFQQFSGINAVIF. Topologically, residues 290–305 are extracellular; that stretch reads YTVQIFKDAGSTIDSN. A helical membrane pass occupies residues 306 to 326; that stretch reads LCTIIVGIVNFFATFMGILLI. Residues 327 to 332 are Cytoplasmic-facing; it reads DRLGRK. A helical transmembrane segment spans residues 333 to 353; that stretch reads ILLYISDIAMILTLSILGGFF. Residues 354–372 lie on the Extracellular side of the membrane; the sequence is YCKAHGPDVSHLGWLPLTC. Residues 373 to 393 traverse the membrane as a helical segment; that stretch reads FVIYILGFSLGFGPIPWLMMG. At 394–402 the chain is on the cytoplasmic side; the sequence is EILPAKIRG. A helical transmembrane segment spans residues 403–423; the sequence is PAASVVTAFNWFCTFVVTKTF. Residues 424 to 433 lie on the Extracellular side of the membrane; that stretch reads QDLTVAMGAH. A helical transmembrane segment spans residues 434-454; the sequence is GAFWLFGVVCIVGLFFVIICV. The Cytoplasmic segment spans residues 455–488; it reads PETRGKSLEEIERKMMGRVPISAVVNIKPFSFNM.

This sequence belongs to the major facilitator superfamily. Sugar transporter (TC 2.A.1.1) family. Trehalose transporter subfamily.

It is found in the cell membrane. Functionally, fails to transport trehalose. This is Facilitated trehalose transporter Tret1-2 homolog from Drosophila simulans (Fruit fly).